The chain runs to 190 residues: Elongation factor P (190 aa).

Lys34 carries the post-translational modification N6-(3,6-diaminohexanoyl)-5-hydroxylysine.

It belongs to the elongation factor P family. Post-translationally, may be beta-lysylated on the epsilon-amino group of Lys-34 by the combined action of EpmA and EpmB, and then hydroxylated on the C5 position of the same residue by EpmC (if this protein is present). Lysylation is critical for the stimulatory effect of EF-P on peptide-bond formation. The lysylation moiety may extend toward the peptidyltransferase center and stabilize the terminal 3-CCA end of the tRNA. Hydroxylation of the C5 position on Lys-34 may allow additional potential stabilizing hydrogen-bond interactions with the P-tRNA.

The protein localises to the cytoplasm. Its pathway is protein biosynthesis; polypeptide chain elongation. In terms of biological role, involved in peptide bond synthesis. Alleviates ribosome stalling that occurs when 3 or more consecutive Pro residues or the sequence PPG is present in a protein, possibly by augmenting the peptidyl transferase activity of the ribosome. Modification of Lys-34 is required for alleviation. The sequence is that of Elongation factor P from Psychrobacter arcticus (strain DSM 17307 / VKM B-2377 / 273-4).